We begin with the raw amino-acid sequence, 209 residues long: Virulence factors putative positive transcription regulator BvgA (209 aa).

Positions 4–119 (KVLIIDDHPV…EVINAAKAVM (116 aa)) constitute a Response regulatory domain. Aspartate 54 carries the post-translational modification 4-aspartylphosphate. The region spanning 142 to 207 (DSTLISVLSN…ELIDLAKRNN (66 aa)) is the HTH luxR-type domain. The H-T-H motif DNA-binding region spans 166–185 (NKDIADSMFLSNKTVSTYKT).

Homodimer. Phosphorylated by BvgS.

In terms of biological role, member of the two-component regulatory system BvgS/BvgA. Activates the transcription of virulence genes. This Bordetella bronchiseptica (strain ATCC BAA-588 / NCTC 13252 / RB50) (Alcaligenes bronchisepticus) protein is Virulence factors putative positive transcription regulator BvgA (bvgA).